A 264-amino-acid polypeptide reads, in one-letter code: tRNA pseudouridine synthase A (264 aa).

The active-site Nucleophile is the Asp-51. Tyr-109 lines the substrate pocket.

It belongs to the tRNA pseudouridine synthase TruA family. Homodimer.

It carries out the reaction uridine(38/39/40) in tRNA = pseudouridine(38/39/40) in tRNA. Its function is as follows. Formation of pseudouridine at positions 38, 39 and 40 in the anticodon stem and loop of transfer RNAs. The protein is tRNA pseudouridine synthase A of Vibrio atlanticus (strain LGP32) (Vibrio splendidus (strain Mel32)).